The following is a 349-amino-acid chain: MKSTFGLLALAAAAKLVSAHATVHAVWINDVDQGAGNSADGYIRSPPNNSPITDVTSTDMTCNVNGKNPVAKTLSVKAGDKVTFEWHHDTRSDSDDIIASSHMGPVMVYMAPTEKGTAGNGWVKIAEEGYSNGKWAVANLIANRGKHSITVPDVPAGEYLLRPEIIALHEGNRQGGAQFYMECVQVKVTSAGTKTLPAGVSIPGAYKATDPGVLFDMYNSFTSYPIPGPAVWDGSSSGSSGSSGSSPATTTAPAVSVTAVPTKEAPVDTSATPTTFVTATKPATTAAPAAPSASSGSNSGSDSCNSGSASGSVKIYGQCGGQNYSGPTSCEAGLICKEWNPYYHQCVSA.

Residues 1-19 (MKSTFGLLALAAAAKLVSA) form the signal peptide. Cu(2+)-binding residues include H20 and H102. C62 and C183 are disulfide-bonded. H169 serves as a coordination point for O2. Residue Y180 participates in Cu(2+) binding. Residues 233–304 (DGSSSGSSGS…SGSNSGSDSC (72 aa)) are disordered. Low complexity-rich tracts occupy residues 234–262 (GSSS…AVPT) and 269–304 (TSAT…SDSC). A CBM1 domain is found at 311–347 (GSVKIYGQCGGQNYSGPTSCEAGLICKEWNPYYHQCV). The N-linked (GlcNAc...) asparagine glycan is linked to N323.

It belongs to the polysaccharide monooxygenase AA9 family. It depends on Cu(2+) as a cofactor.

It localises to the secreted. It catalyses the reaction [(1-&gt;4)-beta-D-glucosyl]n+m + reduced acceptor + O2 = 4-dehydro-beta-D-glucosyl-[(1-&gt;4)-beta-D-glucosyl]n-1 + [(1-&gt;4)-beta-D-glucosyl]m + acceptor + H2O.. Functionally, lytic polysaccharide monooxygenase (LPMO) that depolymerizes crystalline and amorphous polysaccharides via the oxidation of scissile alpha- or beta-(1-4)-glycosidic bonds, yielding C4 oxidation products. Catalysis by LPMOs requires the reduction of the active-site copper from Cu(II) to Cu(I) by a reducing agent and H(2)O(2) or O(2) as a cosubstrate. This is AA9 family lytic polysaccharide monooxygenase A (eglD) from Aspergillus fumigatus (strain CBS 144.89 / FGSC A1163 / CEA10) (Neosartorya fumigata).